A 151-amino-acid chain; its full sequence is Large ribosomal subunit protein bL9 (151 aa).

It belongs to the bacterial ribosomal protein bL9 family.

In terms of biological role, binds to the 23S rRNA. The chain is Large ribosomal subunit protein bL9 from Rhodococcus erythropolis (strain PR4 / NBRC 100887).